The chain runs to 593 residues: UvrABC system protein C (593 aa).

Residues 17–94 (MEPGCYLMKD…IKQYQPRYNI (78 aa)) form the GIY-YIG domain. The region spanning 199 to 234 (KTILKSLEERMLTASESLDFERAKEYRDLIQHIQNL) is the UVR domain.

It belongs to the UvrC family. As to quaternary structure, interacts with UvrB in an incision complex.

It is found in the cytoplasm. The UvrABC repair system catalyzes the recognition and processing of DNA lesions. UvrC both incises the 5' and 3' sides of the lesion. The N-terminal half is responsible for the 3' incision and the C-terminal half is responsible for the 5' incision. The chain is UvrABC system protein C from Staphylococcus aureus (strain Mu3 / ATCC 700698).